A 391-amino-acid chain; its full sequence is Pepsin B (391 aa).

A signal peptide spans 1–16; it reads MKCLILALICLQLSEG. The propeptide at 17 to 60 is activation peptide; the sequence is LVVRQILHKGKSIRERMEENGVLEDFLRYNKKADPAAKFLFNKD. The region spanning 75–388 is the Peptidase A1 domain; it reads YFGEISIGTP…DMANNRVGFA (314 aa). The active site involves Asp93. Disulfide bonds link Cys106–Cys111 and Cys270–Cys274. Residue Asp279 is part of the active site. Residues Cys313 and Cys346 are joined by a disulfide bond.

Belongs to the peptidase A1 family.

Its subcellular location is the secreted. The catalysed reaction is Degradation of gelatin, little activity on hemoglobin. Specificity on B chain of insulin more restricted than that of pepsin A. Does not cleave 1-Phe-|-Val-2, 4-Gln-|-His-5 or 23-Gly-|-Phe-24.. In terms of biological role, hydrolyzes various peptides including beta-endorphin, insulin B chain, dynorphin A, and neurokinin A, with high specificity for the cleavage of the Phe-Xaa bonds. In Monodelphis domestica (Gray short-tailed opossum), this protein is Pepsin B.